Consider the following 356-residue polypeptide: Altered inheritance of mitochondria protein 23, mitochondrial (356 aa).

Residues 1–32 (MLKVPLSDVLSQKMLFLKSFRYFHCTKYFSRD) constitute a mitochondrion transit peptide.

It belongs to the AIM23 family.

The protein resides in the mitochondrion. The chain is Altered inheritance of mitochondria protein 23, mitochondrial (AIM23) from Saccharomyces cerevisiae (strain YJM789) (Baker's yeast).